The following is a 117-amino-acid chain: NADH-ubiquinone oxidoreductase chain 3 (117 aa).

The next 3 membrane-spanning stretches (helical) occupy residues Ile4 to Ile24, Phe57 to Leu77, and Trp88 to Trp108.

The protein belongs to the complex I subunit 3 family.

The protein resides in the mitochondrion membrane. It carries out the reaction a ubiquinone + NADH + 5 H(+)(in) = a ubiquinol + NAD(+) + 4 H(+)(out). Its function is as follows. Core subunit of the mitochondrial membrane respiratory chain NADH dehydrogenase (Complex I) that is believed to belong to the minimal assembly required for catalysis. Complex I functions in the transfer of electrons from NADH to the respiratory chain. The immediate electron acceptor for the enzyme is believed to be ubiquinone. The sequence is that of NADH-ubiquinone oxidoreductase chain 3 (ND3) from Heterololigo bleekeri (Spear squid).